The following is a 245-amino-acid chain: Geranylgeranylglyceryl phosphate synthase (245 aa).

The Mg(2+) site is built by Asp22 and Ser51. Sn-glycerol 1-phosphate is bound by residues 169-175, 200-201, and 222-223; these read YLEAGSG, GG, and GT.

Belongs to the GGGP/HepGP synthase family. Group II subfamily. Homotetramer. Homohexamer. Requires Mg(2+) as cofactor.

The protein resides in the cytoplasm. The enzyme catalyses sn-glycerol 1-phosphate + (2E,6E,10E)-geranylgeranyl diphosphate = sn-3-O-(geranylgeranyl)glycerol 1-phosphate + diphosphate. It participates in membrane lipid metabolism; glycerophospholipid metabolism. Its function is as follows. Prenyltransferase that catalyzes the transfer of the geranylgeranyl moiety of geranylgeranyl diphosphate (GGPP) to the C3 hydroxyl of sn-glycerol-1-phosphate (G1P). This reaction is the first ether-bond-formation step in the biosynthesis of archaeal membrane lipids. The protein is Geranylgeranylglyceryl phosphate synthase of Methanothermobacter thermautotrophicus (strain ATCC 29096 / DSM 1053 / JCM 10044 / NBRC 100330 / Delta H) (Methanobacterium thermoautotrophicum).